A 30-amino-acid polypeptide reads, in one-letter code: rRNA N-glycosylase (30 aa).

This sequence belongs to the ribosome-inactivating protein family. Type 1 RIP subfamily. In terms of tissue distribution, expressed in seeds.

It catalyses the reaction Endohydrolysis of the N-glycosidic bond at one specific adenosine on the 28S rRNA.. In terms of biological role, exhibits N-glycosylase activity. Catalyzes the release of one adenine from a ribosome. Acts as a ribosome-inactivating protein and inhibits protein synthesis in a rabbit-reticulocyte lysate system and in various cell lines (in vitro). The protein is rRNA N-glycosylase of Saponaria ocymoides (Rock soapwort).